Reading from the N-terminus, the 341-residue chain is MIEFRQVSKTFNKKKQKIDALKDVSFTVNRNDIFGVIGYSGAGKSTLVRLVNHLEAASNGQVIVDGHDITNYSDKMMRDIKKDIGMIFQHFNLLNSATVFKNVAMPLILSKKSKTEIKQRVTEMLEFVGLSDKKDQFPEELSGGQKQRVAIARALVTNPKILLCDEATSALDPATTASILTLLKNVNQTFGITIMMITHEMRVIKDICNRVAVMEKGQVVETGTVKEVFSHPKTTIAQNFVSTVIQTEPSTSLIRRLNDEQVGDFKDYKIFVEETQVTQPIINDLIQICGREVKILFSSMSEIQGNTVCYMWLRFNMDQQFDDTAINQYFKEKNIQFEEVH.

In terms of domain architecture, ABC transporter spans isoleucine 2–valine 241. Glycine 38–serine 45 contacts ATP.

The protein belongs to the ABC transporter superfamily. Methionine importer (TC 3.A.1.24) family. In terms of assembly, the complex is composed of two ATP-binding proteins (MetN), two transmembrane proteins (MetI) and a solute-binding protein (MetQ).

It localises to the cell membrane. The enzyme catalyses L-methionine(out) + ATP + H2O = L-methionine(in) + ADP + phosphate + H(+). It catalyses the reaction D-methionine(out) + ATP + H2O = D-methionine(in) + ADP + phosphate + H(+). Part of the ABC transporter complex MetNIQ involved in methionine import. Responsible for energy coupling to the transport system. The chain is Methionine import ATP-binding protein MetN 1 from Staphylococcus aureus (strain MW2).